Consider the following 443-residue polypeptide: ATP-dependent protease ATPase subunit HslU (443 aa).

ATP is bound by residues I18, G60 to E65, D256, E321, and R393.

This sequence belongs to the ClpX chaperone family. HslU subfamily. As to quaternary structure, a double ring-shaped homohexamer of HslV is capped on each side by a ring-shaped HslU homohexamer. The assembly of the HslU/HslV complex is dependent on binding of ATP.

The protein localises to the cytoplasm. In terms of biological role, ATPase subunit of a proteasome-like degradation complex; this subunit has chaperone activity. The binding of ATP and its subsequent hydrolysis by HslU are essential for unfolding of protein substrates subsequently hydrolyzed by HslV. HslU recognizes the N-terminal part of its protein substrates and unfolds these before they are guided to HslV for hydrolysis. The sequence is that of ATP-dependent protease ATPase subunit HslU from Buchnera aphidicola subsp. Schizaphis graminum (strain Sg).